Here is a 182-residue protein sequence, read N- to C-terminus: Sec-independent protein translocase protein TatB (182 aa).

The chain crosses the membrane as a helical span at residues 1-21 (MFDIGFSELLLVFVIGLIVLG). Disordered stretches follow at residues 88–107 (AAES…ASDE) and 121–182 (TQHE…SDKP). The span at 168–182 (AAPVVESSPSSSDKP) shows a compositional bias: low complexity.

The protein belongs to the TatB family. In terms of assembly, the Tat system comprises two distinct complexes: a TatABC complex, containing multiple copies of TatA, TatB and TatC subunits, and a separate TatA complex, containing only TatA subunits. Substrates initially bind to the TatABC complex, which probably triggers association of the separate TatA complex to form the active translocon.

The protein localises to the cell inner membrane. Functionally, part of the twin-arginine translocation (Tat) system that transports large folded proteins containing a characteristic twin-arginine motif in their signal peptide across membranes. Together with TatC, TatB is part of a receptor directly interacting with Tat signal peptides. TatB may form an oligomeric binding site that transiently accommodates folded Tat precursor proteins before their translocation. The sequence is that of Sec-independent protein translocase protein TatB from Salmonella typhi.